The sequence spans 206 residues: 2-phospho-L-lactate guanylyltransferase (206 aa).

It belongs to the CofC family. As to quaternary structure, homodimer.

The enzyme catalyses (2S)-2-phospholactate + GTP + H(+) = (2S)-lactyl-2-diphospho-5'-guanosine + diphosphate. It participates in cofactor biosynthesis; coenzyme F420 biosynthesis. Its function is as follows. Guanylyltransferase that catalyzes the activation of (2S)-2-phospholactate (2-PL) as (2S)-lactyl-2-diphospho-5'-guanosine, via the condensation of 2-PL with GTP. It is involved in the biosynthesis of coenzyme F420, a hydride carrier cofactor. This chain is 2-phospho-L-lactate guanylyltransferase, found in Haloferax volcanii (strain ATCC 29605 / DSM 3757 / JCM 8879 / NBRC 14742 / NCIMB 2012 / VKM B-1768 / DS2) (Halobacterium volcanii).